Reading from the N-terminus, the 158-residue chain is Phosphopantetheine adenylyltransferase (158 aa).

The protein belongs to the eukaryotic CoaD family.

It localises to the cytoplasm. The catalysed reaction is (R)-4'-phosphopantetheine + ATP + H(+) = 3'-dephospho-CoA + diphosphate. The protein operates within cofactor biosynthesis; coenzyme A biosynthesis. In terms of biological role, reversibly transfers an adenylyl group from ATP to 4'-phosphopantetheine, yielding dephospho-CoA (dPCoA) and pyrophosphate. This Pyrococcus horikoshii (strain ATCC 700860 / DSM 12428 / JCM 9974 / NBRC 100139 / OT-3) protein is Phosphopantetheine adenylyltransferase.